A 614-amino-acid chain; its full sequence is Acetyl-coenzyme A carboxylase carboxyl transferase subunits beta/alpha (614 aa).

An acetyl-coenzyme A carboxylase carboxyl transferase subunit beta region spans residues Met-1–Gly-250. The CoA carboxyltransferase N-terminal domain maps to Glu-18–His-287. The interval Glu-18 to Glu-556 is carboxyltransferase. 4 residues coordinate Zn(2+): Cys-22, Cys-25, Cys-41, and Cys-44. The C4-type zinc-finger motif lies at Cys-22–Cys-44. Positions Val-251–Ser-614 are acetyl-coenzyme A carboxylase carboxyl transferase subunit alpha. 2 disordered regions span residues Ala-272–Arg-314 and Gly-577–Ser-614. Positions Asp-297 to Gly-307 are enriched in gly residues. Residues Asp-311–Glu-556 enclose the CoA carboxyltransferase C-terminal domain. A compositionally biased stretch (low complexity) spans Pro-579–Arg-602. The span at Thr-603 to Ser-614 shows a compositional bias: basic and acidic residues.

In the N-terminal section; belongs to the AccD/PCCB family. It in the C-terminal section; belongs to the AccA family. In terms of assembly, acetyl-CoA carboxylase is a heterotetramer composed of biotin carboxyl carrier protein (AccB), biotin carboxylase (AccC) and two subunits of ACCase subunit beta/alpha. Zn(2+) is required as a cofactor.

It localises to the cytoplasm. It carries out the reaction N(6)-carboxybiotinyl-L-lysyl-[protein] + acetyl-CoA = N(6)-biotinyl-L-lysyl-[protein] + malonyl-CoA. Its pathway is lipid metabolism; malonyl-CoA biosynthesis; malonyl-CoA from acetyl-CoA: step 1/1. In terms of biological role, component of the acetyl coenzyme A carboxylase (ACC) complex. Biotin carboxylase (BC) catalyzes the carboxylation of biotin on its carrier protein (BCCP) and then the CO(2) group is transferred by the transcarboxylase to acetyl-CoA to form malonyl-CoA. The chain is Acetyl-coenzyme A carboxylase carboxyl transferase subunits beta/alpha (accD) from Parafrankia sp. (strain EAN1pec).